The sequence spans 327 residues: MAVSDNTFSMSTMFNALPNPTETSGYIPPSGFAPRASATPLHAALFNLMTDGDGVSYFKEMISKSDKTELQRMASLLTSDSDYFMSIVTTKFGSRRVQKLLGKSDDVDAFFCAAILRRFLHITTDKYASYVTIRAMVVFDKVMKKALYERILYHALDLACDQHGCIALNDIITDADDPYYRDQLLELVVSNALRLSNDASGNFVVQHVLTLYDSRCIHNIAVNLYGQCIELSFKKYGSYIVEKLLEVEESMVVVVVELLGCDGDRLMRLARNEFGNFVVVKALRFTKEMRMDLFWGLVQKLMPFIHLLRRSHGNNIANILDTFRLRC.

One can recognise a PUM-HD domain in the interval 1 to 324 (MAVSDNTFSM…NIANILDTFR (324 aa)). Pumilio repeat units follow at residues 79–114 (SDSD…FCAA), 115–149 (ILRR…ALYE), 150–185 (RILY…DQLL), 186–222 (ELVV…NIAV), 223–260 (NLYG…ELLG), and 261–295 (CDGD…DLFW).

It localises to the cytoplasm. Sequence-specific RNA-binding protein that regulates translation and mRNA stability by binding the 3'-UTR of target mRNAs. This Arabidopsis thaliana (Mouse-ear cress) protein is Putative pumilio homolog 19 (APUM19).